Consider the following 179-residue polypeptide: Large ribosomal subunit protein uL5 (179 aa).

This sequence belongs to the universal ribosomal protein uL5 family. Part of the 50S ribosomal subunit; part of the 5S rRNA/L5/L18/L25 subcomplex. Contacts the 5S rRNA and the P site tRNA. Forms a bridge to the 30S subunit in the 70S ribosome.

This is one of the proteins that bind and probably mediate the attachment of the 5S RNA into the large ribosomal subunit, where it forms part of the central protuberance. In the 70S ribosome it contacts protein S13 of the 30S subunit (bridge B1b), connecting the 2 subunits; this bridge is implicated in subunit movement. Contacts the P site tRNA; the 5S rRNA and some of its associated proteins might help stabilize positioning of ribosome-bound tRNAs. The sequence is that of Large ribosomal subunit protein uL5 from Haemophilus ducreyi (strain 35000HP / ATCC 700724).